We begin with the raw amino-acid sequence, 212 residues long: Peptide methionine sulfoxide reductase MsrA (212 aa).

Cysteine 52 is a catalytic residue.

It belongs to the MsrA Met sulfoxide reductase family.

It carries out the reaction L-methionyl-[protein] + [thioredoxin]-disulfide + H2O = L-methionyl-(S)-S-oxide-[protein] + [thioredoxin]-dithiol. It catalyses the reaction [thioredoxin]-disulfide + L-methionine + H2O = L-methionine (S)-S-oxide + [thioredoxin]-dithiol. Has an important function as a repair enzyme for proteins that have been inactivated by oxidation. Catalyzes the reversible oxidation-reduction of methionine sulfoxide in proteins to methionine. In Shigella dysenteriae serotype 1 (strain Sd197), this protein is Peptide methionine sulfoxide reductase MsrA.